Reading from the N-terminus, the 1040-residue chain is Multidrug resistance protein MdtB (1040 aa).

12 consecutive transmembrane segments (helical) span residues 25–45 (LLMAAILLAGIIGYRFLPVAA), 347–367 (LMLAIALVVMIIYLFLRNIPA), 369–389 (IIPGVAVPLSLIGTFAVMVFL), 396–416 (LTLMALTIATGFVVDDAIVVI), 440–460 (IGFTIISLTFSLIAVLIPLLF), 472–492 (FAVTLAVAILISAVVSLTLTP), 537–557 (WLTLSVAFATLLLSVMLWIVI), 863–883 (LGSTVWLIVAAVVAMYIVLGV), 888–908 (FIHPITILSTLPTAGVGALLA), 910–930 (IIAGSELDIIAIIGIILLIGI), 968–988 (ILMTTLAALLGALPLMLSTGV), and 998–1018 (IAMVGGLLVSQVLTLFTTPVI).

It belongs to the resistance-nodulation-cell division (RND) (TC 2.A.6) family. MdtB subfamily. Part of a tripartite efflux system composed of MdtA, MdtB and MdtC. MdtB forms a heteromultimer with MdtC.

The protein localises to the cell inner membrane. This chain is Multidrug resistance protein MdtB, found in Salmonella schwarzengrund (strain CVM19633).